The following is a 128-amino-acid chain: uncharacterized protein (128 aa).

This is an uncharacterized protein from Botryotinia fuckeliana (Noble rot fungus).